A 722-amino-acid chain; its full sequence is Glycine--tRNA ligase beta subunit (722 aa).

It belongs to the class-II aminoacyl-tRNA synthetase family. As to quaternary structure, tetramer of two alpha and two beta subunits.

It localises to the cytoplasm. It carries out the reaction tRNA(Gly) + glycine + ATP = glycyl-tRNA(Gly) + AMP + diphosphate. The polypeptide is Glycine--tRNA ligase beta subunit (Xylella fastidiosa (strain Temecula1 / ATCC 700964)).